We begin with the raw amino-acid sequence, 192 residues long: Imidazoleglycerol-phosphate dehydratase (192 aa).

The protein belongs to the imidazoleglycerol-phosphate dehydratase family.

The protein resides in the cytoplasm. It carries out the reaction D-erythro-1-(imidazol-4-yl)glycerol 3-phosphate = 3-(imidazol-4-yl)-2-oxopropyl phosphate + H2O. It participates in amino-acid biosynthesis; L-histidine biosynthesis; L-histidine from 5-phospho-alpha-D-ribose 1-diphosphate: step 6/9. The polypeptide is Imidazoleglycerol-phosphate dehydratase (Staphylococcus aureus (strain bovine RF122 / ET3-1)).